The chain runs to 437 residues: Trigger factor (437 aa).

A PPIase FKBP-type domain is found at 163-248 (GDIAVINFEG…LNQIKAKVLP (86 aa)).

It belongs to the FKBP-type PPIase family. Tig subfamily.

Its subcellular location is the cytoplasm. The enzyme catalyses [protein]-peptidylproline (omega=180) = [protein]-peptidylproline (omega=0). Involved in protein export. Acts as a chaperone by maintaining the newly synthesized protein in an open conformation. Functions as a peptidyl-prolyl cis-trans isomerase. The sequence is that of Trigger factor from Bdellovibrio bacteriovorus (strain ATCC 15356 / DSM 50701 / NCIMB 9529 / HD100).